The sequence spans 465 residues: UDP-N-acetylmuramoylalanine--D-glutamate ligase (465 aa).

127–133 contributes to the ATP binding site; sequence GSNGKST.

Belongs to the MurCDEF family.

The protein localises to the cytoplasm. It carries out the reaction UDP-N-acetyl-alpha-D-muramoyl-L-alanine + D-glutamate + ATP = UDP-N-acetyl-alpha-D-muramoyl-L-alanyl-D-glutamate + ADP + phosphate + H(+). It participates in cell wall biogenesis; peptidoglycan biosynthesis. Cell wall formation. Catalyzes the addition of glutamate to the nucleotide precursor UDP-N-acetylmuramoyl-L-alanine (UMA). In Cereibacter sphaeroides (strain ATCC 17023 / DSM 158 / JCM 6121 / CCUG 31486 / LMG 2827 / NBRC 12203 / NCIMB 8253 / ATH 2.4.1.) (Rhodobacter sphaeroides), this protein is UDP-N-acetylmuramoylalanine--D-glutamate ligase.